The sequence spans 359 residues: AA9 family lytic polysaccharide monooxygenase B (359 aa).

The N-terminal stretch at 1–18 (MQLFTSFSLLAVASFASA) is a signal peptide. Cu(2+) is bound by residues histidine 19 and histidine 102. Disulfide bonds link cysteine 72-cysteine 190 and cysteine 113-cysteine 117. Asparagine 150 carries an N-linked (GlcNAc...) asparagine glycan. O2 contacts are provided by histidine 176 and glutamine 185. Tyrosine 187 contacts Cu(2+). The tract at residues 241–310 (GGSPGNSAEP…STNINPTSLK (70 aa)) is disordered. Residues 245 to 254 (GNSAEPQPQH) are compositionally biased toward polar residues. Positions 255 to 304 (TSTAVSTAKTASTSSLTTSVTITSQAPSNTANPPQSITTTTTPKPQSTNI) are enriched in low complexity. Asparagine 345 carries N-linked (GlcNAc...) asparagine glycosylation.

This sequence belongs to the polysaccharide monooxygenase AA9 family. Cu(2+) serves as cofactor.

It localises to the secreted. It carries out the reaction [(1-&gt;4)-beta-D-glucosyl]n+m + reduced acceptor + O2 = 4-dehydro-beta-D-glucosyl-[(1-&gt;4)-beta-D-glucosyl]n-1 + [(1-&gt;4)-beta-D-glucosyl]m + acceptor + H2O.. Its function is as follows. Lytic polysaccharide monooxygenase (LPMO) that depolymerizes crystalline and amorphous polysaccharides via the oxidation of scissile alpha- or beta-(1-4)-glycosidic bonds, yielding C1 and C4 oxidation products. Catalysis by LPMOs requires the reduction of the active-site copper from Cu(II) to Cu(I) by a reducing agent and H(2)O(2) or O(2) as a cosubstrate. Active on cellulose and on xyloglucan for deconstruction of plant biomass. The sequence is that of AA9 family lytic polysaccharide monooxygenase B from Geotrichum candidum (Oospora lactis).